Consider the following 588-residue polypeptide: Adenine deaminase (588 aa).

This sequence belongs to the metallo-dependent hydrolases superfamily. Adenine deaminase family. Homodimer. Mn(2+) is required as a cofactor.

The enzyme catalyses adenine + H2O + H(+) = hypoxanthine + NH4(+). The sequence is that of Adenine deaminase from Escherichia coli (strain 55989 / EAEC).